The following is a 1053-amino-acid chain: DNA-directed RNA polymerase subunit beta' (1053 aa).

The Zn(2+) site is built by cysteine 60, cysteine 62, cysteine 75, and cysteine 78. The Mg(2+) site is built by aspartate 449, aspartate 451, and aspartate 453.

It belongs to the RNA polymerase beta' chain family. In terms of assembly, the RNAP catalytic core consists of 2 alpha, 1 beta, 1 beta' and 1 omega subunit. When a sigma factor is associated with the core the holoenzyme is formed, which can initiate transcription. It depends on Mg(2+) as a cofactor. Requires Zn(2+) as cofactor.

The enzyme catalyses RNA(n) + a ribonucleoside 5'-triphosphate = RNA(n+1) + diphosphate. Functionally, DNA-dependent RNA polymerase catalyzes the transcription of DNA into RNA using the four ribonucleoside triphosphates as substrates. This Brochothrix thermosphacta (Microbacterium thermosphactum) protein is DNA-directed RNA polymerase subunit beta'.